Consider the following 101-residue polypeptide: Urease subunit beta (101 aa).

It belongs to the urease beta subunit family. As to quaternary structure, heterotrimer of UreA (gamma), UreB (beta) and UreC (alpha) subunits. Three heterotrimers associate to form the active enzyme.

The protein resides in the cytoplasm. The catalysed reaction is urea + 2 H2O + H(+) = hydrogencarbonate + 2 NH4(+). The protein operates within nitrogen metabolism; urea degradation; CO(2) and NH(3) from urea (urease route): step 1/1. This is Urease subunit beta from Azoarcus sp. (strain BH72).